Here is a 248-residue protein sequence, read N- to C-terminus: Probable aquaporin TIP2-2 (248 aa).

2 helical membrane-spanning segments follow: residues 21–41 (AYVA…GSAI) and 55–75 (AGLV…VAIG). Positions 84 to 86 (NPA) match the NPA 1 motif. Helical transmembrane passes span 87–109 (VTFG…WIAQ), 133–153 (LSGV…FGLV), and 168–188 (LGTI…LVAG). Residues 196 to 198 (NPA) carry the NPA 2 motif. Residues 210–230 (YTNIWIYWVGPLVGGGLAGLV) form a helical membrane-spanning segment.

It belongs to the MIP/aquaporin (TC 1.A.8) family. TIP (TC 1.A.8.10) subfamily. Expressed in roots and leaves.

The protein localises to the vacuole membrane. In terms of biological role, aquaporins facilitate the transport of water and small neutral solutes across cell membranes. May be involved in transport from the vacuolar compartment to the cytoplasm. In Oryza sativa subsp. japonica (Rice), this protein is Probable aquaporin TIP2-2 (TIP2-2).